We begin with the raw amino-acid sequence, 120 residues long: MKATRKQLTQRRHFRIRRRVEGTGDRPRLAVFRSHKHIYAQVIDDEKQHTLVAASTLDKDLKGELASGGNISASTAVGNLIAKRALEKGITKVVFDRGGNLYHGRVKALADAAREAGLDF.

Belongs to the universal ribosomal protein uL18 family. In terms of assembly, part of the 50S ribosomal subunit; part of the 5S rRNA/L5/L18/L25 subcomplex. Contacts the 5S and 23S rRNAs.

This is one of the proteins that bind and probably mediate the attachment of the 5S RNA into the large ribosomal subunit, where it forms part of the central protuberance. The polypeptide is Large ribosomal subunit protein uL18 (Picosynechococcus sp. (strain ATCC 27264 / PCC 7002 / PR-6) (Agmenellum quadruplicatum)).